The primary structure comprises 830 residues: DNA gyrase subunit A (830 aa).

The 465-residue stretch at 33 to 497 (LPDVRDGLKP…AENDIDIEDL (465 aa)) folds into the Topo IIA-type catalytic domain. Residue Tyr-121 is the O-(5'-phospho-DNA)-tyrosine intermediate of the active site. The GyrA-box motif lies at 524–530 (QKRGGRG). A disordered region spans residues 805–830 (KDDSEQLEDSEEVSEVHDAEENNSEE).

The protein belongs to the type II topoisomerase GyrA/ParC subunit family. As to quaternary structure, heterotetramer, composed of two GyrA and two GyrB chains. In the heterotetramer, GyrA contains the active site tyrosine that forms a transient covalent intermediate with DNA, while GyrB binds cofactors and catalyzes ATP hydrolysis.

It localises to the cytoplasm. The enzyme catalyses ATP-dependent breakage, passage and rejoining of double-stranded DNA.. Functionally, a type II topoisomerase that negatively supercoils closed circular double-stranded (ds) DNA in an ATP-dependent manner to modulate DNA topology and maintain chromosomes in an underwound state. Negative supercoiling favors strand separation, and DNA replication, transcription, recombination and repair, all of which involve strand separation. Also able to catalyze the interconversion of other topological isomers of dsDNA rings, including catenanes and knotted rings. Type II topoisomerases break and join 2 DNA strands simultaneously in an ATP-dependent manner. This Clostridium acetobutylicum (strain ATCC 824 / DSM 792 / JCM 1419 / IAM 19013 / LMG 5710 / NBRC 13948 / NRRL B-527 / VKM B-1787 / 2291 / W) protein is DNA gyrase subunit A.